We begin with the raw amino-acid sequence, 183 residues long: Casparian strip membrane protein 2 (183 aa).

Residues 1-23 (MDSGEQGETSKAPLNKGVSRGVS) lie on the Cytoplasmic side of the membrane. The chain crosses the membrane as a helical span at residues 24 to 44 (ILDLILRVIAVISTLASAIAM). The Extracellular segment spans residues 45–71 (GTTNETLPLFTPFIQFKARYSDLPALT). An N-linked (GlcNAc...) asparagine glycan is attached at Asn-48. The helical transmembrane segment at 72 to 92 (FFVVANSIVSAYLILSLPLSI) threads the bilayer. The Cytoplasmic segment spans residues 93 to 104 (AHIIRSGAKYSR). A helical transmembrane segment spans residues 105-125 (LVLIIFDAAMLALVTAASSAA). The Extracellular portion of the chain corresponds to 126–158 (TAIVYLAHKGNVRANWLAICQQLDSFCERTSGS). A helical transmembrane segment spans residues 159-179 (LVGSFGAMVLLILLILLSAMA). Residues 180-183 (LARR) lie on the Cytoplasmic side of the membrane.

It belongs to the Casparian strip membrane proteins (CASP) family. As to quaternary structure, homodimer and heterodimers.

It localises to the cell membrane. In terms of biological role, regulates membrane-cell wall junctions and localized cell wall deposition. Required for establishment of the Casparian strip membrane domain (CSD) and the subsequent formation of Casparian strips, a cell wall modification of the root endodermis that determines an apoplastic barrier between the intraorganismal apoplasm and the extraorganismal apoplasm and prevents lateral diffusion. This is Casparian strip membrane protein 2 from Triticum aestivum (Wheat).